The primary structure comprises 573 residues: E3 ubiquitin-protein ligase TRIM23 (573 aa).

The segment at 31 to 76 adopts an RING-type; degenerate zinc-finger fold; sequence CGVCEDVFSLQGDKVPRLLLCGHTVCHDCLTRLPLHGRAIRCPFDR. The segment at 122 to 168 adopts a B box-type; degenerate zinc-finger fold; the sequence is ESIIRCDEDEAHVASVYCTVCATHLCSECSQVTHSTKTLAKHRRVPL. Residues 351–378 adopt a coiled-coil conformation; it reads RVVLAKQEITRLLETLQKQQQQFTEVAD. The interval 390 to 573 is ARF-like; sequence FTKDNRVYHG…LVAAGVLDVA (184 aa). Residues 411–418, 454–458, and 513–516 contribute to the GTP site; these read LDGAGKTT, VGGKH, and KQDV.

This sequence in the C-terminal section; belongs to the small GTPase superfamily. Arf family. As to quaternary structure, homodimer. Interacts with PSCD1. Interacts with UBE2D2. Interacts with TBK1 (via N-terminal kinase domain) and p62/SQSTM1.

The protein localises to the cytoplasm. The protein resides in the endomembrane system. It localises to the golgi apparatus membrane. It is found in the lysosome membrane. It carries out the reaction S-ubiquitinyl-[E2 ubiquitin-conjugating enzyme]-L-cysteine + [acceptor protein]-L-lysine = [E2 ubiquitin-conjugating enzyme]-L-cysteine + N(6)-ubiquitinyl-[acceptor protein]-L-lysine.. Its pathway is protein modification; protein ubiquitination. In terms of biological role, acts as an E3 ubiquitin-protein ligase. Plays an essential role in autophagy activation during viral infection. Mechanistically, activates TANK-binding kinase 1/TBK1 by facilitating its dimerization and ability to phosphorylate the selective autophagy receptor SQSTM1. In order to achieve this function, TRIM23 mediates 'Lys-27'-linked auto-ubiquitination of its ADP-ribosylation factor (ARF) domain to induce its GTPase activity and its recruitment to autophagosomes. The protein is E3 ubiquitin-protein ligase TRIM23 (Trim23) of Rattus norvegicus (Rat).